A 217-amino-acid chain; its full sequence is Sentrin-specific protease 8 (217 aa).

M1 is subject to N-acetylmethionine. The tract at residues 11–174 (SLLRQSDVSL…MYVICNTEAL (164 aa)) is protease. Active-site residues include H102 and D119. C163 functions as the Nucleophile in the catalytic mechanism.

The protein belongs to the peptidase C48 family.

Its function is as follows. Protease that catalyzes two essential functions in the NEDD8 pathway: processing of full-length NEDD8 to its mature form and deconjugation of NEDD8 from targeted proteins such as cullins or p53. This chain is Sentrin-specific protease 8 (Senp8), found in Rattus norvegicus (Rat).